Here is a 372-residue protein sequence, read N- to C-terminus: Mevalonate 3,5-bisphosphate decarboxylase (372 aa).

This sequence belongs to the mevalonate 3,5-bisphosphate decarboxylase family. Homodimer.

The catalysed reaction is (R)-3,5-bisphosphomevalonate + H(+) = isopentenyl phosphate + phosphate + CO2. Its pathway is isoprenoid biosynthesis; isopentenyl diphosphate biosynthesis via mevalonate pathway. Catalyzes the ATP-independent decarboxylation of (R)-mevalonate 3,5-bisphosphate to isopentenyl phosphate. Functions in an alternative mevalonate pathway, only present in extreme acidophiles of the Thermoplasmatales order, which passes through mevalonate 3-phosphate rather than mevalonate 5-phosphate. The protein is Mevalonate 3,5-bisphosphate decarboxylase of Thermoplasma volcanium (strain ATCC 51530 / DSM 4299 / JCM 9571 / NBRC 15438 / GSS1).